Here is a 426-residue protein sequence, read N- to C-terminus: Serine--tRNA ligase (426 aa).

230 to 232 (TAE) lines the L-serine pocket. An ATP-binding site is contributed by 261-263 (RSE). Residue Glu-284 participates in L-serine binding. 348 to 351 (EISS) lines the ATP pocket. Ser-384 lines the L-serine pocket.

It belongs to the class-II aminoacyl-tRNA synthetase family. Type-1 seryl-tRNA synthetase subfamily. In terms of assembly, homodimer. The tRNA molecule binds across the dimer.

It localises to the cytoplasm. The enzyme catalyses tRNA(Ser) + L-serine + ATP = L-seryl-tRNA(Ser) + AMP + diphosphate + H(+). It carries out the reaction tRNA(Sec) + L-serine + ATP = L-seryl-tRNA(Sec) + AMP + diphosphate + H(+). It participates in aminoacyl-tRNA biosynthesis; selenocysteinyl-tRNA(Sec) biosynthesis; L-seryl-tRNA(Sec) from L-serine and tRNA(Sec): step 1/1. Catalyzes the attachment of serine to tRNA(Ser). Is also able to aminoacylate tRNA(Sec) with serine, to form the misacylated tRNA L-seryl-tRNA(Sec), which will be further converted into selenocysteinyl-tRNA(Sec). The chain is Serine--tRNA ligase from Phenylobacterium zucineum (strain HLK1).